The following is a 416-amino-acid chain: MKAVGVVVEYNPFHNGHLHHLTEARKQAKADVVIAVMSGYFLQRGEPAILPKWERTSLALQGGADLVVELPYAFSTQKAEWFATGAVSILAALEADALCFGSEEGTIEPFHRLYHFMAKHRLAWDRMIKEELDKGMSYPTATSLAFKRLEGSAEHLDLSRPNNILGFHYVKAIYDLHTSIKAMTIPRIKAGYHDDSLNESSIASATSIRKSLKTKEGWQMVDRVVPSYTTEMLKSFEKETTFLPSWERLFPLLKYRLLTATPEQLHAIYEGEEGLEYRALKTIVSATSFHDWMTKMKTKRYTWTRIQRYATHLFTNTTKEEIHSVLPRGTESLPYIRLLGMTSRGQMYLNGKKKQLTTPVITRPAKVDDRMMNLDLRAAFSYYASFPPSLQQKRLKEEFHRTPIRIDHKPEPKKEA.

ATP is bound by residues 7–20, Gly-101, Asn-162, and 187–188; these read VVEY…HLHH and RI.

This sequence belongs to the TmcAL family.

The protein resides in the cytoplasm. It carries out the reaction cytidine(34) in elongator tRNA(Met) + acetate + ATP = N(4)-acetylcytidine(34) in elongator tRNA(Met) + AMP + diphosphate. Catalyzes the formation of N(4)-acetylcytidine (ac(4)C) at the wobble position of elongator tRNA(Met), using acetate and ATP as substrates. First activates an acetate ion to form acetyladenylate (Ac-AMP) and then transfers the acetyl group to tRNA to form ac(4)C34. The polypeptide is tRNA(Met) cytidine acetate ligase (Halalkalibacterium halodurans (strain ATCC BAA-125 / DSM 18197 / FERM 7344 / JCM 9153 / C-125) (Bacillus halodurans)).